A 189-amino-acid chain; its full sequence is Alanine and glycine-rich protein (189 aa).

Gly residues predominate over residues 127–160 (AGAGGGSGGGGGGGSGSGGSGGSGGSGGSGGNDG). The interval 127–170 (AGAGGGSGGGGGGGSGSGGSGGSGGSGGSGGNDGNDGNDGSSSR) is disordered.

As to expression, component of the organic matrix of calcified shell layers like nacre and prisms.

The protein localises to the secreted. The protein is Alanine and glycine-rich protein of Mytilus californianus (California mussel).